A 403-amino-acid polypeptide reads, in one-letter code: Acetylornithine aminotransferase (403 aa).

Residues 107 to 108 (GA) and phenylalanine 140 each bind pyridoxal 5'-phosphate. Residue arginine 143 coordinates N(2)-acetyl-L-ornithine. 225-228 (DEVQ) contacts pyridoxal 5'-phosphate. An N6-(pyridoxal phosphate)lysine modification is found at lysine 254. Serine 282 is a N(2)-acetyl-L-ornithine binding site. Threonine 283 provides a ligand contact to pyridoxal 5'-phosphate.

The protein belongs to the class-III pyridoxal-phosphate-dependent aminotransferase family. ArgD subfamily. In terms of assembly, homodimer. Pyridoxal 5'-phosphate is required as a cofactor.

It localises to the cytoplasm. The enzyme catalyses N(2)-acetyl-L-ornithine + 2-oxoglutarate = N-acetyl-L-glutamate 5-semialdehyde + L-glutamate. It functions in the pathway amino-acid biosynthesis; L-arginine biosynthesis; N(2)-acetyl-L-ornithine from L-glutamate: step 4/4. This is Acetylornithine aminotransferase from Vibrio cholerae serotype O1 (strain ATCC 39315 / El Tor Inaba N16961).